We begin with the raw amino-acid sequence, 623 residues long: V-type proton ATPase catalytic subunit A (623 aa).

Residue 252–259 participates in ATP binding; that stretch reads GAFGCGKT.

This sequence belongs to the ATPase alpha/beta chains family. In terms of assembly, V-ATPase is a heteromultimeric enzyme composed of a peripheral catalytic V1 complex (main components: subunits A, B, C, D, E, and F) attached to an integral membrane V0 proton pore complex (main component: the proteolipid protein).

It catalyses the reaction ATP + H2O + 4 H(+)(in) = ADP + phosphate + 5 H(+)(out). Catalytic subunit of the peripheral V1 complex of vacuolar ATPase. V-ATPase vacuolar ATPase is responsible for acidifying a variety of intracellular compartments in eukaryotic cells. This Vigna radiata var. radiata (Mung bean) protein is V-type proton ATPase catalytic subunit A.